A 68-amino-acid chain; its full sequence is Large ribosomal subunit protein uL29 (68 aa).

Belongs to the universal ribosomal protein uL29 family.

The sequence is that of Large ribosomal subunit protein uL29 from Geobacillus sp. (strain WCH70).